The primary structure comprises 320 residues: Lipoyl synthase (320 aa).

Residues 1-24 (MIGKLVRDLKIPDQRHPEKAHRPD) show a composition bias toward basic and acidic residues. Residues 1–30 (MIGKLVRDLKIPDQRHPEKAHRPDNVQPKK) form a disordered region. Residues Cys-60, Cys-65, Cys-71, Cys-86, Cys-90, Cys-93, and Ser-300 each coordinate [4Fe-4S] cluster. The Radical SAM core domain occupies 72 to 289 (WSQGHATMMI…EKAAYGKGFL (218 aa)).

It belongs to the radical SAM superfamily. Lipoyl synthase family. [4Fe-4S] cluster serves as cofactor.

It localises to the cytoplasm. The enzyme catalyses [[Fe-S] cluster scaffold protein carrying a second [4Fe-4S](2+) cluster] + N(6)-octanoyl-L-lysyl-[protein] + 2 oxidized [2Fe-2S]-[ferredoxin] + 2 S-adenosyl-L-methionine + 4 H(+) = [[Fe-S] cluster scaffold protein] + N(6)-[(R)-dihydrolipoyl]-L-lysyl-[protein] + 4 Fe(3+) + 2 hydrogen sulfide + 2 5'-deoxyadenosine + 2 L-methionine + 2 reduced [2Fe-2S]-[ferredoxin]. It participates in protein modification; protein lipoylation via endogenous pathway; protein N(6)-(lipoyl)lysine from octanoyl-[acyl-carrier-protein]: step 2/2. Functionally, catalyzes the radical-mediated insertion of two sulfur atoms into the C-6 and C-8 positions of the octanoyl moiety bound to the lipoyl domains of lipoate-dependent enzymes, thereby converting the octanoylated domains into lipoylated derivatives. The sequence is that of Lipoyl synthase from Cereibacter sphaeroides (strain ATCC 17029 / ATH 2.4.9) (Rhodobacter sphaeroides).